We begin with the raw amino-acid sequence, 327 residues long: MAEGLVLKGTMRAHTDMVTAIATPIDNADIIVSASRDKSIILWKLTKDDKAYGVAQRRLTGHSHFVEDVVLSSDGQFALSGSWDGELRLWDLAAGVSTRRFVGHTKDVLSVAFSLDNRQIVSASRDRTIKLWNTLGECKYTISEGGEGHRDWVSCVRFSPNTLQPTIVSASWDKTVKVWNLSNCKLRSTLAGHTGYVSTVAVSPDGSLCASGGKDGVVLLWDLAEGKKLYSLEANSVIHALCFSPNRYWLCAATEHGIKIWDLESKSIVEDLKVDLKAEAEKADNSGPAATKRKVIYCTSLNWSADGSTLFSGYTDGVIRVWGIGRY.

7 WD repeats span residues 13 to 44, 61 to 91, 103 to 133, 148 to 180, 192 to 222, 233 to 262, and 293 to 323; these read AHTDMVTAIATPIDNADIIVSASRDKSIILWK, GHSHFVEDVVLSSDGQFALSGSWDGELRLWD, GHTKDVLSVAFSLDNRQIVSASRDRTIKLWN, GHRDWVSCVRFSPNTLQPTIVSASWDKTVKVWN, GHTGYVSTVAVSPDGSLCASGGKDGVVLLWD, EANSVIHALCFSPNRYWLCAATEHGIKIWD, and RKVIYCTSLNWSADGSTLFSGYTDGVIRVWG.

It belongs to the WD repeat G protein beta family. Ribosomal protein RACK1 subfamily. In terms of assembly, homodimer and heterodimer with RACK1B or RACK1C. Interacts with NUDT7. Interacts with GB1, MEKK1, MKK4, MKK5, MPK3 and MPK6, but not with GPA1 or MPK4. Interacts with OFUT20. In terms of tissue distribution, widely expressed.

Its subcellular location is the cytoplasm. It is found in the nucleus. In terms of biological role, major component of the RACK1 regulatory proteins that play a role in multiple signal transduction pathways. Involved in multiple hormone responses and developmental processes. MAPK cascade scaffolding protein involved in the protease IV and ArgC signaling pathway but not the flg22 pathway. The sequence is that of Small ribosomal subunit protein RACK1z from Arabidopsis thaliana (Mouse-ear cress).